The following is a 165-amino-acid chain: Yapsin-5 (165 aa).

A signal peptide spans 1–24 (MQLFSILSLLSSLMCSLTVLGSSA). An N-linked (GlcNAc...) asparagine glycan is attached at N57. A Peptidase A1 domain is found at 67–165 (YVVKMEIGTP…TRLSSMTYTY (99 aa)).

It belongs to the peptidase A1 family.

The protein is Yapsin-5 (YPS5) of Saccharomyces cerevisiae (strain ATCC 204508 / S288c) (Baker's yeast).